The following is a 616-amino-acid chain: General alpha-glucoside permease (616 aa).

The Cytoplasmic segment spans residues 1–115 (MKNIISLVSK…AALWSILVST (115 aa)). The span at 15-27 (SKNEDKNISESSR) shows a compositional bias: basic and acidic residues. Positions 15 to 40 (SKNEDKNISESSRDIVNQQEVFNTED) are disordered. The helical transmembrane segment at 116-136 (TLVMEGYDTALLSALYALPVF) threads the bilayer. At 137 to 160 (QRKFGTLNGEGSYEITSQWQIGLN) the chain is on the extracellular side. The chain crosses the membrane as a helical span at residues 161–181 (MCVLCGEMIGLQITTYMVEFM). Residues 182 to 191 (GNRYTMITAL) lie on the Cytoplasmic side of the membrane. The helical transmembrane segment at 192 to 212 (GLLTAYIFILYYCKSLAMIAV) threads the bilayer. Residues 213 to 214 (GQ) lie on the Extracellular side of the membrane. Residues 215-235 (ILSAIPWGCFQSLAVTYASEV) form a helical membrane-spanning segment. Topologically, residues 236–242 (CPLALRY) are cytoplasmic. Residues 243–263 (YMTSYSNICWLFGQIFASGIM) form a helical membrane-spanning segment. Over 264–278 (KNSQENLGNSDLGYK) the chain is Extracellular. Residues 279–299 (LPFALQWIWPAPLMIGIFFAP) form a helical membrane-spanning segment. The Cytoplasmic portion of the chain corresponds to 300 to 373 (ESPWWLVRKD…VNGRRTRLAC (74 aa)). The chain crosses the membrane as a helical span at residues 374-394 (LTWVAQNSSGAVLLGYSTYFF). The Extracellular portion of the chain corresponds to 395–404 (ERAGMATDKA). A helical transmembrane segment spans residues 405-425 (FTFSLIQYCLGLAGTLCSWVI). The Cytoplasmic segment spans residues 426-433 (SGRVGRWT). A helical membrane pass occupies residues 434–454 (ILTYGLAFQMVCLFIIGGMGF). Topologically, residues 455-466 (GSGSSASNGAGG) are extracellular. A helical transmembrane segment spans residues 467–487 (LLLALSFFYNAGIGAVVYCIV). Over 488–504 (AEIPSAELRTKTIVLAR) the chain is Cytoplasmic. Residues 505-525 (ICYNLMAVINAILTPYMLNVS) traverse the membrane as a helical segment. Over 526 to 532 (DWNWGAK) the chain is Extracellular. A helical transmembrane segment spans residues 533-553 (TGLYWGGFTAVTLAWVIIDLP). Residues 554–616 (ETTGRTFSEI…QRELNAADKC (63 aa)) are Cytoplasmic-facing. The tract at residues 587 to 616 (GKTQHDSLADESISQSSSIKQRELNAADKC) is disordered. Positions 606–616 (KQRELNAADKC) are enriched in basic and acidic residues.

It belongs to the major facilitator superfamily. Sugar transporter (TC 2.A.1.1) family.

It is found in the cell membrane. In terms of biological role, high-affinity uptake of alpha-glucosides such as maltose, turanose, isomaltose, alpha-methylglucoside, maltotriose, palatinose, trehalose, melezitose and glucose. Acts with the concomitant transport of protons into the cell (symport system). Provides an alternative and minor mechanism for growth on trehalose carbon source by transporting trehalose into the cytoplasm for conversion to glucose by neutral trehalase NTH1. The protein is General alpha-glucoside permease of Saccharomyces cerevisiae (strain CEN.PK113-7D) (Baker's yeast).